A 63-amino-acid polypeptide reads, in one-letter code: Cytochrome c oxidase subunit 7C, mitochondrial (63 aa).

Residues 1–16 constitute a mitochondrion transit peptide; sequence MLGQSIRRFTTSVVRR. Topologically, residues 17 to 34 are mitochondrial matrix; it reads SHYEEGPGKNLPFSVENK. Lys-25 bears the N6-acetyllysine; alternate mark. Residue Lys-25 is modified to N6-succinyllysine; alternate. The helical transmembrane segment at 35-57 threads the bilayer; sequence WRLLAMMTVYFGSGFAAPFFIVR. Over 58-63 the chain is Mitochondrial intermembrane; that stretch reads HQLLKK.

It belongs to the cytochrome c oxidase VIIc family. In terms of assembly, component of the cytochrome c oxidase (complex IV, CIV), a multisubunit enzyme composed of 14 subunits. The complex is composed of a catalytic core of 3 subunits MT-CO1, MT-CO2 and MT-CO3, encoded in the mitochondrial DNA, and 11 supernumerary subunits COX4I, COX5A, COX5B, COX6A, COX6B, COX6C, COX7A, COX7B, COX7C, COX8 and NDUFA4, which are encoded in the nuclear genome. The complex exists as a monomer or a dimer and forms supercomplexes (SCs) in the inner mitochondrial membrane with NADH-ubiquinone oxidoreductase (complex I, CI) and ubiquinol-cytochrome c oxidoreductase (cytochrome b-c1 complex, complex III, CIII), resulting in different assemblies (supercomplex SCI(1)III(2)IV(1) and megacomplex MCI(2)III(2)IV(2)). Interacts with RAB5IF.

It localises to the mitochondrion inner membrane. It functions in the pathway energy metabolism; oxidative phosphorylation. Functionally, component of the cytochrome c oxidase, the last enzyme in the mitochondrial electron transport chain which drives oxidative phosphorylation. The respiratory chain contains 3 multisubunit complexes succinate dehydrogenase (complex II, CII), ubiquinol-cytochrome c oxidoreductase (cytochrome b-c1 complex, complex III, CIII) and cytochrome c oxidase (complex IV, CIV), that cooperate to transfer electrons derived from NADH and succinate to molecular oxygen, creating an electrochemical gradient over the inner membrane that drives transmembrane transport and the ATP synthase. Cytochrome c oxidase is the component of the respiratory chain that catalyzes the reduction of oxygen to water. Electrons originating from reduced cytochrome c in the intermembrane space (IMS) are transferred via the dinuclear copper A center (CU(A)) of subunit 2 and heme A of subunit 1 to the active site in subunit 1, a binuclear center (BNC) formed by heme A3 and copper B (CU(B)). The BNC reduces molecular oxygen to 2 water molecules using 4 electrons from cytochrome c in the IMS and 4 protons from the mitochondrial matrix. This Mus musculus (Mouse) protein is Cytochrome c oxidase subunit 7C, mitochondrial (Cox7c).